A 547-amino-acid chain; its full sequence is Tripartite motif-containing protein 5 (547 aa).

A2 is subject to N-acetylalanine. Residues C15–R59 form an RING-type zinc finger. Phosphoserine is present on S86. The B box-type zinc finger occupies Q91–V132. The Zn(2+) site is built by C96, H99, C118, and H124. Residues V132–L224 adopt a coiled-coil conformation. The interval F186 to N199 is required for interaction with GABARAP and for autophagy. The B30.2/SPRY domain maps to P280–S547.

The protein belongs to the TRIM/RBCC family. Can form homodimers and homotrimers. In addition to lower-order dimerization, also exhibits a higher-order multimerization and both low- and high-order multimerizations are essential for its restriction activity. Interacts with BTBD1 and BTBD2. Interacts with PSMC4, PSMC5, PSMD7 and HSPA8/HSC70. Interacts (via B30.2/SPRY domain) with HSPA1A/B. Interacts with PSMC2, MAP3K7/TAK1, TAB2 and TAB3. Interacts with SQSTM1. Interacts with TRIM6 and TRIM34. Interacts with ULK1 (phosphorylated form), GABARAP, GABARAPL1, GABARAPL2, MAP1LC3A, MAP1LC3C and BECN1. Post-translationally, degraded in a proteasome-independent fashion in the absence of viral infection but in a proteasome-dependent fashion following exposure to restriction sensitive virus. Autoubiquitinated in a RING finger- and UBE2D2-dependent manner. Monoubiquitinated by TRIM21. Deubiquitinated by Yersinia YopJ. Ubiquitination may not lead to proteasomal degradation.

The protein localises to the cytoplasm. It localises to the nucleus. It carries out the reaction S-ubiquitinyl-[E2 ubiquitin-conjugating enzyme]-L-cysteine + [acceptor protein]-L-lysine = [E2 ubiquitin-conjugating enzyme]-L-cysteine + N(6)-ubiquitinyl-[acceptor protein]-L-lysine.. The protein operates within protein modification; protein ubiquitination. Capsid-specific restriction factor that prevents infection from non-host-adapted retroviruses. Blocks viral replication early in the life cycle, after viral entry but before reverse transcription. In addition to acting as a capsid-specific restriction factor, also acts as a pattern recognition receptor that activates innate immune signaling in response to the retroviral capsid lattice. Binding to the viral capsid triggers its E3 ubiquitin ligase activity, and in concert with the heterodimeric ubiquitin conjugating enzyme complex UBE2V1-UBE2N (also known as UBC13-UEV1A complex) generates 'Lys-63'-linked polyubiquitin chains, which in turn are catalysts in the autophosphorylation of the MAP3K7/TAK1 complex (includes TAK1, TAB2, and TAB3). Activation of the MAP3K7/TAK1 complex by autophosphorylation results in the induction and expression of NF-kappa-B and MAPK-responsive inflammatory genes, thereby leading to an innate immune response in the infected cell. Plays a role in regulating autophagy through activation of autophagy regulator BECN1 by causing its dissociation from its inhibitors BCL2 and TAB2. The sequence is that of Tripartite motif-containing protein 5 (TRIM5) from Lagothrix lagotricha (Brown woolly monkey).